The primary structure comprises 204 residues: Sex-determining region Y protein (204 aa).

A sufficient for interaction with KPNB1 region spans residues 59–136 (RVKRPMNAFI…YKYRPRRKAK (78 aa)). Positions 60 to 128 (VKRPMNAFIV…MHREKYPNYK (69 aa)) form a DNA-binding region, HMG box. Required for nuclear localization regions lie at residues 61–77 (KRPMNAFIVWSRDQRRK) and 130–136 (RPRRKAK). The interval 107–139 (WPFFQEAQKLQAMHREKYPNYKYRPRRKAKMLP) is sufficient for interaction with EP300. K136 carries the post-translational modification N6-acetyllysine. Positions 138–155 (LPKNCSLLPADPASVLCS) are necessary for interaction with ZNF208 isoform KRAB-O. The interval 175–204 (RMEHQLGHLPPINAASSPQQRDRYSHWTKL) is disordered. Residues 194–204 (QRDRYSHWTKL) are compositionally biased toward basic and acidic residues. The necessary for interaction with SLC9A3R2 stretch occupies residues 198-204 (YSHWTKL).

It belongs to the SRY family. As to quaternary structure, interacts with CALM, EP300, HDAC3, KPNB1, ZNF208 isoform KRAB-O, PARP1, SLC9A3R2 and WT1. The interaction with EP300 modulates its DNA-binding activity. The interaction with KPNB1 is sensitive to dissociation by Ran in the GTP-bound form. Interaction with PARP1 impaired its DNA-binding activity. Phosphorylated on serine residues by PKA. Phosphorylation by PKA enhances its DNA-binding activity and stimulates transcription repression. Post-translationally, acetylation of Lys-136 contributes to its nuclear localization and enhances its interaction with KPNB1. Deacetylated by HDAC3. In terms of processing, poly-ADP-ribosylated by PARP1. ADP-ribosylation reduces its DNA-binding activity.

The protein resides in the nucleus speckle. Its subcellular location is the cytoplasm. It is found in the nucleus. Its function is as follows. Transcriptional regulator that controls a genetic switch in male development. It is necessary and sufficient for initiating male sex determination by directing the development of supporting cell precursors (pre-Sertoli cells) as Sertoli rather than granulosa cells. Involved in different aspects of gene regulation including promoter activation or repression. Binds to the DNA consensus sequence 5'-[AT]AACAA[AT]-3'. SRY HMG box recognizes DNA by partial intercalation in the minor groove and promotes DNA bending. Also involved in pre-mRNA splicing. In male adult brain involved in the maintenance of motor functions of dopaminergic neurons. This is Sex-determining region Y protein from Homo sapiens (Human).